Here is a 132-residue protein sequence, read N- to C-terminus: UPF0201 protein MTH_433 (132 aa).

It belongs to the UPF0201 family.

The chain is UPF0201 protein MTH_433 from Methanothermobacter thermautotrophicus (strain ATCC 29096 / DSM 1053 / JCM 10044 / NBRC 100330 / Delta H) (Methanobacterium thermoautotrophicum).